The primary structure comprises 203 residues: Outer-membrane lipoprotein carrier protein (203 aa).

The first 21 residues, 1–21 (MKKLAITCALLSGMVVSQVWA), serve as a signal peptide directing secretion.

It belongs to the LolA family. Monomer.

Its subcellular location is the periplasm. In terms of biological role, participates in the translocation of lipoproteins from the inner membrane to the outer membrane. Only forms a complex with a lipoprotein if the residue after the N-terminal Cys is not an aspartate (The Asp acts as a targeting signal to indicate that the lipoprotein should stay in the inner membrane). The sequence is that of Outer-membrane lipoprotein carrier protein from Klebsiella pneumoniae subsp. pneumoniae (strain ATCC 700721 / MGH 78578).